The sequence spans 339 residues: MVREEVAGSTQTLQWKCVESRVDSKRLYYGRFILSPLRKGQADTVGIALRRALLGEIEGTCITRAKFWSVPHEYSTIAGIEESVQEILLNLKEIVLRSNLYGVRDASICVKGPRYITAQDIILPPSVEIVDTAQPIANLTEPIDFCIDLQIKRDRGYQTELRKNYQDGSYPIDAVSMPVRNVNYSIFSCGNGNEKHEILFLEIWTNGSLTPKEALYEASRNLIDLFLPFLHAEEEGTSFEENKNRFTPPLFTFQKRLTNLKKNKKGIPLNCIFIDQLELTSRTYNCLKRANIHTLLDLLSKTEEDLMRIDSFHMEDRKHIWDTLEKHLPIDLLKNKLSF.

Residues M1–E233 form an alpha N-terminal domain (alpha-NTD) region. The interval K264–F339 is alpha C-terminal domain (alpha-CTD).

The protein belongs to the RNA polymerase alpha chain family. In plastids the minimal PEP RNA polymerase catalytic core is composed of four subunits: alpha, beta, beta', and beta''. When a (nuclear-encoded) sigma factor is associated with the core the holoenzyme is formed, which can initiate transcription.

It is found in the plastid. It localises to the chloroplast. It catalyses the reaction RNA(n) + a ribonucleoside 5'-triphosphate = RNA(n+1) + diphosphate. Its function is as follows. DNA-dependent RNA polymerase catalyzes the transcription of DNA into RNA using the four ribonucleoside triphosphates as substrates. The sequence is that of DNA-directed RNA polymerase subunit alpha from Elymus californicus (California bottlebrush grass).